Consider the following 806-residue polypeptide: Phenylalanine--tRNA ligase beta subunit (806 aa).

Residues 40–155 (NKGVKGVVVG…SDAEVGADAL (116 aa)) enclose the tRNA-binding domain. One can recognise a B5 domain in the interval 409–484 (VQERTVSVTA…RLYGYDHIPV (76 aa)). The Mg(2+) site is built by Asp-462, Asp-468, Glu-471, and Glu-472. Residues 712–805 (PRFPSMTRDM…VEEKFGAELR (94 aa)) form the FDX-ACB domain.

The protein belongs to the phenylalanyl-tRNA synthetase beta subunit family. Type 1 subfamily. As to quaternary structure, tetramer of two alpha and two beta subunits. Requires Mg(2+) as cofactor.

The protein resides in the cytoplasm. It carries out the reaction tRNA(Phe) + L-phenylalanine + ATP = L-phenylalanyl-tRNA(Phe) + AMP + diphosphate + H(+). The protein is Phenylalanine--tRNA ligase beta subunit of Bacillus cereus (strain ATCC 14579 / DSM 31 / CCUG 7414 / JCM 2152 / NBRC 15305 / NCIMB 9373 / NCTC 2599 / NRRL B-3711).